The following is a 390-amino-acid chain: Phosphopentomutase (390 aa).

Mn(2+) is bound by residues Asp9, Asp283, His288, Asp324, His325, and His336.

Belongs to the phosphopentomutase family. Requires Mn(2+) as cofactor.

It is found in the cytoplasm. It carries out the reaction 2-deoxy-alpha-D-ribose 1-phosphate = 2-deoxy-D-ribose 5-phosphate. It catalyses the reaction alpha-D-ribose 1-phosphate = D-ribose 5-phosphate. The protein operates within carbohydrate degradation; 2-deoxy-D-ribose 1-phosphate degradation; D-glyceraldehyde 3-phosphate and acetaldehyde from 2-deoxy-alpha-D-ribose 1-phosphate: step 1/2. Functionally, isomerase that catalyzes the conversion of deoxy-ribose 1-phosphate (dRib-1-P) and ribose 1-phosphate (Rib-1-P) to deoxy-ribose 5-phosphate (dRib-5-P) and ribose 5-phosphate (Rib-5-P), respectively. In Thermotoga petrophila (strain ATCC BAA-488 / DSM 13995 / JCM 10881 / RKU-1), this protein is Phosphopentomutase.